Reading from the N-terminus, the 257-residue chain is Diphthine synthase (257 aa).

S-adenosyl-L-methionine is bound by residues leucine 9, aspartate 85, valine 88, 113-114, leucine 164, alanine 209, and histidine 234; that span reads SI.

This sequence belongs to the diphthine synthase family. As to quaternary structure, homodimer.

The catalysed reaction is 2-[(3S)-amino-3-carboxypropyl]-L-histidyl-[translation elongation factor 2] + 3 S-adenosyl-L-methionine = diphthine-[translation elongation factor 2] + 3 S-adenosyl-L-homocysteine + 3 H(+). Its pathway is protein modification; peptidyl-diphthamide biosynthesis. Functionally, S-adenosyl-L-methionine-dependent methyltransferase that catalyzes the trimethylation of the amino group of the modified target histidine residue in translation elongation factor 2 (EF-2), to form an intermediate called diphthine. The three successive methylation reactions represent the second step of diphthamide biosynthesis. This Methanocaldococcus jannaschii (strain ATCC 43067 / DSM 2661 / JAL-1 / JCM 10045 / NBRC 100440) (Methanococcus jannaschii) protein is Diphthine synthase.